Reading from the N-terminus, the 81-residue chain is Large ribosomal subunit protein bL31B (81 aa).

The protein belongs to the bacterial ribosomal protein bL31 family. Type B subfamily. In terms of assembly, part of the 50S ribosomal subunit.

This is Large ribosomal subunit protein bL31B from Limosilactobacillus fermentum (strain NBRC 3956 / LMG 18251) (Lactobacillus fermentum).